We begin with the raw amino-acid sequence, 803 residues long: Volume-regulated anion channel subunit LRRC8B (803 aa).

Topologically, residues 1–25 (MITLTELKCLADAQSSYHILKPWWD) are cytoplasmic. Residues 26–46 (VFWYYITLIMLLVAVLAGALQ) form a helical membrane-spanning segment. Topologically, residues 47–119 (LTQSRVLCCL…YEKQLHWFAK (73 aa)) are extracellular. 2 disulfide bridges follow: C55/C304 and C109/C289. The N-linked (GlcNAc...) asparagine glycan is linked to N78. Residues 120 to 140 (FFPYLVLLHTLIFAACSNFWL) form a helical membrane-spanning segment. The Cytoplasmic portion of the chain corresponds to 141–261 (HYPSTSSRLE…DIIYRVYLKQ (121 aa)). Phosphoserine occurs at positions 186 and 196. The helical transmembrane segment at 262–282 (IIVKVILFVLIITYVPYFLTH) threads the bilayer. Over 283 to 307 (ITLEIDCSVDVQAFTGYKRYQCVYS) the chain is Extracellular. Residues 308–328 (LAEIFKVLASFYVILVILYGL) traverse the membrane as a helical segment. Topologically, residues 329–803 (TSSYSLWWML…ERLQTCLDKC (475 aa)) are cytoplasmic. 13 LRR repeats span residues 464–486 (NLKE…AFLE), 488–509 (NLKI…VFHL), 511–532 (NLKE…MQLE), 539–559 (NLRT…VTDL), 562–582 (SLQK…NNLK), 586–607 (NLKS…IFSL), 609–630 (NLHE…ISFQ), 634–655 (NLSC…IGAL), 657–678 (NLEQ…LFLC), 680–701 (KLHY…IQYL), 703–724 (NLQY…LFQC), 726–747 (KLQC…VGEL), and 749–771 (NLTH…EGCQ).

The protein belongs to the LRRC8 family. As to quaternary structure, heterohexamer; oligomerizes with other LRRC8 proteins (LRRC8A, LRRC8C, LRRC8D and/or LRRC8E) to form a heterohexamer. In vivo, the subunit composition may depend primarily on expression levels, and heterooligomeric channels containing various proportions of the different LRRC8 proteins may coexist.

The protein resides in the cell membrane. It localises to the endoplasmic reticulum membrane. It catalyses the reaction chloride(in) = chloride(out). The catalysed reaction is iodide(out) = iodide(in). The enzyme catalyses taurine(out) = taurine(in). Non-essential component of the volume-regulated anion channel (VRAC, also named VSOAC channel), an anion channel required to maintain a constant cell volume in response to extracellular or intracellular osmotic changes. The VRAC channel conducts iodide better than chloride and can also conduct organic osmolytes like taurine. Channel activity requires LRRC8A plus at least one other family member (LRRC8B, LRRC8C, LRRC8D or LRRC8E); channel characteristics depend on the precise subunit composition. The polypeptide is Volume-regulated anion channel subunit LRRC8B (Homo sapiens (Human)).